Reading from the N-terminus, the 69-residue chain is Large ribosomal subunit protein bL28 (69 aa).

It belongs to the bacterial ribosomal protein bL28 family.

The sequence is that of Large ribosomal subunit protein bL28 from Oleidesulfovibrio alaskensis (strain ATCC BAA-1058 / DSM 17464 / G20) (Desulfovibrio alaskensis).